The sequence spans 53 residues: Light-harvesting protein B800/850/890 beta-1 chain (53 aa).

Over 1-19 (ADNMSLTGLSDEEAKEFHS) the chain is Cytoplasmic. Residues H18 and H36 each contribute to the a bacteriochlorophyll site. Residues 20 to 42 (IFMQSFLIFTAVAVVAHFLAWAW) form a helical membrane-spanning segment. Residues 43–53 (RPWIPGAEGYG) are Periplasmic-facing.

The protein belongs to the antenna complex beta subunit family. As to quaternary structure, the core complex is formed by different alpha and beta chains, binding bacteriochlorophyll molecules, and arranged most probably in tetrameric structures disposed around the reaction center. The non-pigmented gamma chains may constitute additional components.

It localises to the cell inner membrane. Its function is as follows. Antenna complexes are light-harvesting systems, which transfer the excitation energy to the reaction centers. The chain is Light-harvesting protein B800/850/890 beta-1 chain from Halorhodospira halophila (strain DSM 244 / SL1) (Ectothiorhodospira halophila (strain DSM 244 / SL1)).